The primary structure comprises 495 residues: REST corepressor 3 (495 aa).

The ELM2 domain maps to 1-83 (MRVGAEYQAR…KSLADLPNFT (83 aa)). A Glycyl lysine isopeptide (Lys-Gly) (interchain with G-Cter in SUMO2) cross-link involves residue K20. The SANT 1 domain occupies 84 to 135 (PFPDEWTVEDKVLFEQAFSFHGKSFHRIQQMLPDKTIASLVKYYYSWKKTRS). Residues 147–219 (LANRHNQGDS…SQRSKCRPPK (73 aa)) are disordered. Phosphoserine is present on residues S156 and S171. Residues 162–184 (ETHPMDGNDSDYDPKKEAKKEGN) are compositionally biased toward basic and acidic residues. K193 participates in a covalent cross-link: Glycyl lysine isopeptide (Lys-Gly) (interchain with G-Cter in SUMO2). Basic residues predominate over residues 205–217 (QHRHHSQRSKCRP). The stretch at 237–273 (AANTILRQLDMELISLKRQVQNAKQVNSALKQKMEGG) forms a coiled coil. Residue K285 forms a Glycyl lysine isopeptide (Lys-Gly) (interchain with G-Cter in SUMO2) linkage. The 52-residue stretch at 285 to 336 (KINARWTTEEQLLAVQGVRKYGKDFQAIADVIGNKTVGQVKNFFVNYRRRFN) folds into the SANT 2 domain. Residues 346-495 (AEQGTQASNG…IQTDSQSSLH (150 aa)) form a disordered region. Residues 348–357 (QGTQASNGDA) show a composition bias toward polar residues. The residue at position 376 (T376) is a Phosphothreonine. Residues 393–405 (PSPPAPSSTPTPT) show a composition bias toward pro residues. The span at 419–428 (RPTLPAAPAL) shows a compositional bias: low complexity. Asymmetric dimethylarginine occurs at positions 445 and 457. Residues 475–495 (VGGQQPPSLIGIQTDSQSSLH) show a composition bias toward polar residues.

Belongs to the CoREST family.

The protein resides in the nucleus. Functionally, may act as a component of a corepressor complex that represses transcription. This chain is REST corepressor 3 (RCOR3), found in Homo sapiens (Human).